A 289-amino-acid polypeptide reads, in one-letter code: BTB/POZ domain-containing protein KCTD7 (289 aa).

Positions 1–35 (MVVVTGREPDSRRQDGAMSSSDAEDDFLEPATPTA) are disordered. Positions 51 to 149 (EVVPLNIGGA…QLENMQPLKG (99 aa)) constitute a BTB domain.

As to quaternary structure, interacts with CUL3.

It is found in the cell membrane. It localises to the cytoplasm. Its subcellular location is the cytosol. In terms of biological role, may be involved in the control of excitability of cortical neurons. The sequence is that of BTB/POZ domain-containing protein KCTD7 (KCTD7) from Homo sapiens (Human).